Consider the following 324-residue polypeptide: uncharacterized protein (324 aa).

The next 8 helical transmembrane spans lie at valine 5–methionine 24, phenylalanine 39–leucine 61, phenylalanine 68–alanine 90, tryptophan 95–valine 117, glutamine 130–leucine 152, methionine 162–leucine 179, leucine 199–tryptophan 218, and threonine 228–threonine 250.

The protein resides in the cell membrane. This is an uncharacterized protein from Bacillus subtilis (strain 168).